The primary structure comprises 360 residues: DNA replication and repair protein RecF (360 aa).

An ATP-binding site is contributed by 33–40 (GENGSGKT).

It belongs to the RecF family.

It is found in the cytoplasm. Its function is as follows. The RecF protein is involved in DNA metabolism; it is required for DNA replication and normal SOS inducibility. RecF binds preferentially to single-stranded, linear DNA. It also seems to bind ATP. The protein is DNA replication and repair protein RecF of Rickettsia bellii (strain OSU 85-389).